We begin with the raw amino-acid sequence, 110 residues long: UPF0122 protein SaurJH9_1295 (110 aa).

Belongs to the UPF0122 family.

In terms of biological role, might take part in the signal recognition particle (SRP) pathway. This is inferred from the conservation of its genetic proximity to ftsY/ffh. May be a regulatory protein. This is UPF0122 protein SaurJH9_1295 from Staphylococcus aureus (strain JH9).